A 443-amino-acid polypeptide reads, in one-letter code: Glutamate--tRNA ligase 1 (443 aa).

Positions 7–17 (PSPTGYLHVGN) match the 'HIGH' region motif. The short motif at 236-240 (KISKR) is the 'KMSKS' region element. K239 contributes to the ATP binding site.

It belongs to the class-I aminoacyl-tRNA synthetase family. Glutamate--tRNA ligase type 1 subfamily. Monomer.

Its subcellular location is the cytoplasm. It carries out the reaction tRNA(Glu) + L-glutamate + ATP = L-glutamyl-tRNA(Glu) + AMP + diphosphate. In terms of biological role, catalyzes the attachment of glutamate to tRNA(Glu) in a two-step reaction: glutamate is first activated by ATP to form Glu-AMP and then transferred to the acceptor end of tRNA(Glu). In Ehrlichia chaffeensis (strain ATCC CRL-10679 / Arkansas), this protein is Glutamate--tRNA ligase 1.